A 296-amino-acid polypeptide reads, in one-letter code: MRKIKLIAVVGPTAVGKTALGIELAKTFNGEIISGDSQQVYQKLDIGTAKASKEEQEQAYHHLIDVREVNENYSVYDFVKEAKVAIDTIISKGKIPIIVGGTGLYLQSLFEGYHLGGEVNQETLMAYREKLESLSDEDLFEKLTEQSIVIPQVNRRRAIRALELAKFGNDLQNSESPYDVLLIGLNDDRQVLYDRINRRVDLMIDNGLLDEAKWLYDNYPSVQASRGIGYKELFPYFSKQIPLEEAVDKLKQNTRRFAKRQLTWFRNRMNVEFIMVGEENYQQKIKRKVSDFLSSK.

11–18 (GPTAVGKT) provides a ligand contact to ATP. 13–18 (TAVGKT) contacts substrate. Residues 36–39 (DSQQ) form an interaction with substrate tRNA region.

This sequence belongs to the IPP transferase family. As to quaternary structure, monomer. Mg(2+) is required as a cofactor.

It catalyses the reaction adenosine(37) in tRNA + dimethylallyl diphosphate = N(6)-dimethylallyladenosine(37) in tRNA + diphosphate. In terms of biological role, catalyzes the transfer of a dimethylallyl group onto the adenine at position 37 in tRNAs that read codons beginning with uridine, leading to the formation of N6-(dimethylallyl)adenosine (i(6)A). This Streptococcus agalactiae serotype Ia (strain ATCC 27591 / A909 / CDC SS700) protein is tRNA dimethylallyltransferase.